The following is a 265-amino-acid chain: Nitrogenase vanadium-iron protein alpha chain (265 aa).

[8Fe-7S] cluster contacts are provided by C17 and C80. C199 contributes to the [7Fe-V-9S-C-homocitryl] cluster binding site.

The protein belongs to the NifD/NifK/NifE/NifN family. In terms of assembly, hexamer of two alpha, two beta, and two delta chains. [8Fe-7S] cluster is required as a cofactor. The cofactor is [7Fe-V-9S-C-homocitryl] cluster.

The enzyme catalyses N2 + 8 reduced [2Fe-2S]-[ferredoxin] + 16 ATP + 16 H2O = H2 + 8 oxidized [2Fe-2S]-[ferredoxin] + 2 NH4(+) + 16 ADP + 16 phosphate + 6 H(+). Functionally, this vanadium-iron protein is part of the nitrogenase complex that catalyzes the key enzymatic reactions in nitrogen fixation. The chain is Nitrogenase vanadium-iron protein alpha chain (vnfD) from Azorhizophilus paspali (Azotobacter paspali).